Here is a 407-residue protein sequence, read N- to C-terminus: NADH-quinone oxidoreductase subunit D (407 aa).

The protein belongs to the complex I 49 kDa subunit family. NDH-1 is composed of 14 different subunits. Subunits NuoB, C, D, E, F, and G constitute the peripheral sector of the complex.

Its subcellular location is the cell inner membrane. The catalysed reaction is a quinone + NADH + 5 H(+)(in) = a quinol + NAD(+) + 4 H(+)(out). In terms of biological role, NDH-1 shuttles electrons from NADH, via FMN and iron-sulfur (Fe-S) centers, to quinones in the respiratory chain. The immediate electron acceptor for the enzyme in this species is believed to be ubiquinone. Couples the redox reaction to proton translocation (for every two electrons transferred, four hydrogen ions are translocated across the cytoplasmic membrane), and thus conserves the redox energy in a proton gradient. This is NADH-quinone oxidoreductase subunit D from Roseobacter denitrificans (strain ATCC 33942 / OCh 114) (Erythrobacter sp. (strain OCh 114)).